The chain runs to 40 residues: Photosystem II reaction center protein J (40 aa).

Residues 8-28 form a helical membrane-spanning segment; it reads IPLWIIGTVAGILVIGLIGIF.

This sequence belongs to the PsbJ family. In terms of assembly, PSII is composed of 1 copy each of membrane proteins PsbA, PsbB, PsbC, PsbD, PsbE, PsbF, PsbH, PsbI, PsbJ, PsbK, PsbL, PsbM, PsbT, PsbX, PsbY, PsbZ, Psb30/Ycf12, at least 3 peripheral proteins of the oxygen-evolving complex and a large number of cofactors. It forms dimeric complexes.

Its subcellular location is the plastid. It localises to the chloroplast thylakoid membrane. Functionally, one of the components of the core complex of photosystem II (PSII). PSII is a light-driven water:plastoquinone oxidoreductase that uses light energy to abstract electrons from H(2)O, generating O(2) and a proton gradient subsequently used for ATP formation. It consists of a core antenna complex that captures photons, and an electron transfer chain that converts photonic excitation into a charge separation. This Oenothera elata subsp. hookeri (Hooker's evening primrose) protein is Photosystem II reaction center protein J.